A 276-amino-acid chain; its full sequence is Diaminopimelate epimerase (276 aa).

Residues Asn13, Gln46, and Asn66 each contribute to the substrate site. The Proton donor role is filled by Cys75. Residues 76–77 (GN), Asn159, Asn192, and 210–211 (ER) each bind substrate. Catalysis depends on Cys219, which acts as the Proton acceptor. Substrate is bound at residue 220 to 221 (GT).

It belongs to the diaminopimelate epimerase family. Homodimer.

Its subcellular location is the cytoplasm. The catalysed reaction is (2S,6S)-2,6-diaminopimelate = meso-2,6-diaminopimelate. It functions in the pathway amino-acid biosynthesis; L-lysine biosynthesis via DAP pathway; DL-2,6-diaminopimelate from LL-2,6-diaminopimelate: step 1/1. Functionally, catalyzes the stereoinversion of LL-2,6-diaminopimelate (L,L-DAP) to meso-diaminopimelate (meso-DAP), a precursor of L-lysine and an essential component of the bacterial peptidoglycan. This chain is Diaminopimelate epimerase, found in Hahella chejuensis (strain KCTC 2396).